The chain runs to 314 residues: GDSL-like esterase Rv1075c (314 aa).

The first 21 residues, 1–21 (MPRRSTIALATAGALASTGTA), serve as a signal peptide directing secretion. Ser80 acts as the Nucleophile in catalysis. The Proton donor role is filled by Asp244. The Proton acceptor role is filled by His247. The interval 276–314 (IHETPSRPGTATLEPGHTRHSMMSRLRRPRPARAVPTGG) is disordered. The segment covering 293-306 (TRHSMMSRLRRPRP) has biased composition (basic residues).

Belongs to the 'GDSL' lipolytic enzyme family.

It carries out the reaction an acetyl ester + H2O = an aliphatic alcohol + acetate + H(+). The enzyme catalyses a butanoate ester + H2O = an aliphatic alcohol + butanoate + H(+). The catalysed reaction is triacetin + H2O = diacetylglycerol + acetate + H(+). It catalyses the reaction 1,2,3-tributanoylglycerol + H2O = dibutanoylglycerol + butanoate + H(+). With respect to regulation, esterase activity is significantly inhibited by the serine modifier phenylmethylsulfonyl fluoride (PMSF). Completely inhibited by diethyl pyrocarbonate. Esterase that preferentially hydrolyzes short-chain fatty acids, particularly pNP-acetate (C2) and pNP-butyrate (C4). Also has weak activity with pNP-hexanoate (C6) and pNP-octanoate (C8). It can also hydrolyze short-chain tryglycerides such as triacetin and tributyrin. Important for intracellular survival. This chain is GDSL-like esterase Rv1075c, found in Mycobacterium tuberculosis (strain ATCC 25618 / H37Rv).